The primary structure comprises 101 residues: MNIPLGEKVMLDIVAMFRQYSGDDGRMDMPGLVNLMKENFPNFLSGCEKSDMDYLSNALEKKDDNKDKKVNYSEFLSLLGDITIDHHKIMHGVAPCSGGSQ.

2 consecutive EF-hand domains span residues 13–48 (IVAM…SGCE) and 50–85 (SDMD…ITID). Ca(2+)-binding residues include Asp-63, Asn-65, Asp-67, Lys-69, and Glu-74. Zn(2+)-binding residues include His-87 and His-91.

This sequence belongs to the S-100 family.

The sequence is that of Protein S100-A7-like 2 (S100A7L2) from Homo sapiens (Human).